Here is a 287-residue protein sequence, read N- to C-terminus: Pentatricopeptide repeat-containing protein At4g18975, chloroplastic (287 aa).

Residues 1 to 34 (MALCNLNPTQGIFPLQGLSKSQEFICFSLLQSPR) constitute a chloroplast transit peptide. 2 PPR repeats span residues 165–199 (TMGTYDILLLAFDMDERADEAESLWNMILHTHTRS) and 201–235 (PRRLFARMIALYAHHDLHDKVIEVFADMEELKVSP).

The protein belongs to the PPR family. P subfamily.

The protein resides in the plastid. The protein localises to the chloroplast. The protein is Pentatricopeptide repeat-containing protein At4g18975, chloroplastic of Arabidopsis thaliana (Mouse-ear cress).